The sequence spans 631 residues: Chaperone protein DnaK (631 aa).

Residue T197 is modified to Phosphothreonine; by autocatalysis. A disordered region spans residues A599 to K631. Positions A603–E612 are enriched in low complexity.

Belongs to the heat shock protein 70 family.

Functionally, acts as a chaperone. This Rickettsia bellii (strain RML369-C) protein is Chaperone protein DnaK.